Here is a 499-residue protein sequence, read N- to C-terminus: Bifunctional purine biosynthesis protein PurH (499 aa).

In terms of domain architecture, MGS-like spans 1-144 (MIKRALISVF…KNFKDVVVLT (144 aa)).

The protein belongs to the PurH family.

It catalyses the reaction (6R)-10-formyltetrahydrofolate + 5-amino-1-(5-phospho-beta-D-ribosyl)imidazole-4-carboxamide = 5-formamido-1-(5-phospho-D-ribosyl)imidazole-4-carboxamide + (6S)-5,6,7,8-tetrahydrofolate. The catalysed reaction is IMP + H2O = 5-formamido-1-(5-phospho-D-ribosyl)imidazole-4-carboxamide. It functions in the pathway purine metabolism; IMP biosynthesis via de novo pathway; 5-formamido-1-(5-phospho-D-ribosyl)imidazole-4-carboxamide from 5-amino-1-(5-phospho-D-ribosyl)imidazole-4-carboxamide (10-formyl THF route): step 1/1. Its pathway is purine metabolism; IMP biosynthesis via de novo pathway; IMP from 5-formamido-1-(5-phospho-D-ribosyl)imidazole-4-carboxamide: step 1/1. In Clostridium botulinum (strain Loch Maree / Type A3), this protein is Bifunctional purine biosynthesis protein PurH.